The sequence spans 133 residues: Small ribosomal subunit protein uS8 (133 aa).

The protein belongs to the universal ribosomal protein uS8 family. Part of the 30S ribosomal subunit. Contacts proteins S5 and S12.

Its function is as follows. One of the primary rRNA binding proteins, it binds directly to 16S rRNA central domain where it helps coordinate assembly of the platform of the 30S subunit. The sequence is that of Small ribosomal subunit protein uS8 from Prochlorococcus marinus (strain AS9601).